Here is a 296-residue protein sequence, read N- to C-terminus: Small ribosomal subunit protein uS2 (296 aa).

The interval 252–296 (TSSKTVSKLKQSKKLSKTQNIDEETNTEFDQALGGACENNNSDNT) is disordered.

The protein belongs to the universal ribosomal protein uS2 family.

The chain is Small ribosomal subunit protein uS2 (rpsB) from Rickettsia prowazekii (strain Madrid E).